The chain runs to 216 residues: MQSGRVIMIVGNGDVPEGAAATIDAADLVIRFNDCRSVGKGGSRTDIIAVCNTGRPALSMLGGGRWKTSAAVRQARELWSVRSGARFAAMRAALAGTHPDLDDFCDDYTAGFESFARATARKHRVIAAETHDRLERDLARFAPSPYVAPSSGLVVIADIVSSFAAAGDDVVLAGFGHIGWQWHPFAAERRYVDALAAQGRLRRLHPFASSDLPQGA.

In terms of biological role, involved in the expression of hydrogenase activity. May be a regulatory gene affecting the expression of the hydrogenase operon or could be involved in the process of nickel incorporation into the hydrogenase apoenzyme. The chain is Urease operon 23 kDa accessory protein from Rhizobium meliloti (strain 1021) (Ensifer meliloti).